The sequence spans 270 residues: 3-methyl-2-oxobutanoate hydroxymethyltransferase (270 aa).

Mg(2+)-binding residues include D50 and D89. 3-methyl-2-oxobutanoate is bound by residues 50-51, D89, and K118; that span reads DS. E120 is a binding site for Mg(2+). E187 (proton acceptor) is an active-site residue.

This sequence belongs to the PanB family. In terms of assembly, homodecamer; pentamer of dimers. It depends on Mg(2+) as a cofactor.

The protein resides in the cytoplasm. The enzyme catalyses 3-methyl-2-oxobutanoate + (6R)-5,10-methylene-5,6,7,8-tetrahydrofolate + H2O = 2-dehydropantoate + (6S)-5,6,7,8-tetrahydrofolate. Its pathway is cofactor biosynthesis; (R)-pantothenate biosynthesis; (R)-pantoate from 3-methyl-2-oxobutanoate: step 1/2. Functionally, catalyzes the reversible reaction in which hydroxymethyl group from 5,10-methylenetetrahydrofolate is transferred onto alpha-ketoisovalerate to form ketopantoate. This chain is 3-methyl-2-oxobutanoate hydroxymethyltransferase, found in Helicobacter pylori (strain P12).